The primary structure comprises 40 residues: Photosystem II reaction center protein J (40 aa).

A helical transmembrane segment spans residues 8–28 (IPLWIIGTVTGILVIGLIGIF).

It belongs to the PsbJ family. In terms of assembly, PSII is composed of 1 copy each of membrane proteins PsbA, PsbB, PsbC, PsbD, PsbE, PsbF, PsbH, PsbI, PsbJ, PsbK, PsbL, PsbM, PsbT, PsbX, PsbY, PsbZ, Psb30/Ycf12, at least 3 peripheral proteins of the oxygen-evolving complex and a large number of cofactors. It forms dimeric complexes.

Its subcellular location is the plastid. The protein resides in the chloroplast thylakoid membrane. Functionally, one of the components of the core complex of photosystem II (PSII). PSII is a light-driven water:plastoquinone oxidoreductase that uses light energy to abstract electrons from H(2)O, generating O(2) and a proton gradient subsequently used for ATP formation. It consists of a core antenna complex that captures photons, and an electron transfer chain that converts photonic excitation into a charge separation. The polypeptide is Photosystem II reaction center protein J (Eucalyptus globulus subsp. globulus (Tasmanian blue gum)).